Here is a 799-residue protein sequence, read N- to C-terminus: DNA ligase (799 aa).

The segment covering 1–11 (MTEVKTGRVVD) has biased composition (basic and acidic residues). The tract at residues 1-35 (MTEVKTGRVVDDAPVNDAPENNAAEATSPARHDAI) is disordered. NAD(+)-binding positions include 67-71 (DAEYD), 116-117 (SL), and D147. K149 serves as the catalytic N6-AMP-lysine intermediate. The NAD(+) site is built by R170, E207, K327, and K351. C445, C448, C463, and C468 together coordinate Zn(2+). Positions 634-723 (AIVLPLQGLK…VASVDASEAV (90 aa)) constitute a BRCT domain. Residues 720–799 (SEAVAEETPP…RGRAEQLKLF (80 aa)) form a disordered region. Low complexity predominate over residues 755 to 767 (GSASGDDSRGAAA). A compositionally biased stretch (basic and acidic residues) spans 787-799 (DVPRGRAEQLKLF).

This sequence belongs to the NAD-dependent DNA ligase family. LigA subfamily. Mg(2+) is required as a cofactor. Requires Mn(2+) as cofactor.

It catalyses the reaction NAD(+) + (deoxyribonucleotide)n-3'-hydroxyl + 5'-phospho-(deoxyribonucleotide)m = (deoxyribonucleotide)n+m + AMP + beta-nicotinamide D-nucleotide.. Its function is as follows. DNA ligase that catalyzes the formation of phosphodiester linkages between 5'-phosphoryl and 3'-hydroxyl groups in double-stranded DNA using NAD as a coenzyme and as the energy source for the reaction. It is essential for DNA replication and repair of damaged DNA. This chain is DNA ligase, found in Nitratidesulfovibrio vulgaris (strain ATCC 29579 / DSM 644 / CCUG 34227 / NCIMB 8303 / VKM B-1760 / Hildenborough) (Desulfovibrio vulgaris).